The sequence spans 450 residues: C4-dicarboxylate transport protein (450 aa).

The next 8 membrane-spanning stretches (helical) occupy residues 25-45 (VVFA…YGAA), 56-76 (LIKM…IASM), 90-110 (MAYF…VANV), 162-182 (ILQV…VGDA), 200-220 (LVNI…AFTI), 234-254 (LVLT…GAVA), 319-339 (IYMT…LTLG), and 367-387 (AATL…ILGV).

Belongs to the dicarboxylate/amino acid:cation symporter (DAACS) (TC 2.A.23) family.

It localises to the cell inner membrane. In terms of biological role, responsible for the transport of dicarboxylates such as succinate, fumarate, and malate from the periplasm across the membrane. This chain is C4-dicarboxylate transport protein, found in Acidovorax sp. (strain JS42).